The chain runs to 61 residues: Metallothionein-2 (61 aa).

Residue Met-1 is modified to N-acetylmethionine. Residues Met-1 to Cys-29 are beta. Residues Cys-5, Cys-7, Cys-13, Cys-15, Cys-19, Cys-21, Cys-24, Cys-26, Cys-29, Cys-33, Cys-34, Cys-36, Cys-37, Cys-41, Cys-44, Cys-48, Cys-50, and Cys-57 each contribute to the a divalent metal cation site. The alpha stretch occupies residues Lys-30–Ala-61. The residue at position 58 (Ser-58) is a Phosphoserine. A divalent metal cation-binding residues include Cys-59 and Cys-60.

It belongs to the metallothionein superfamily. Type 1 family.

In terms of biological role, metallothioneins have a high content of cysteine residues that bind various heavy metals; these proteins are transcriptionally regulated by both heavy metals and glucocorticoids. In Mus musculus (Mouse), this protein is Metallothionein-2 (Mt2).